The sequence spans 89 residues: Small ribosomal subunit protein uS15 (89 aa).

Belongs to the universal ribosomal protein uS15 family. In terms of assembly, part of the 30S ribosomal subunit. Forms a bridge to the 50S subunit in the 70S ribosome, contacting the 23S rRNA.

One of the primary rRNA binding proteins, it binds directly to 16S rRNA where it helps nucleate assembly of the platform of the 30S subunit by binding and bridging several RNA helices of the 16S rRNA. In terms of biological role, forms an intersubunit bridge (bridge B4) with the 23S rRNA of the 50S subunit in the ribosome. The polypeptide is Small ribosomal subunit protein uS15 (Histophilus somni (strain 129Pt) (Haemophilus somnus)).